The sequence spans 100 residues: Apolipoprotein C-II (100 aa).

The first 22 residues, 1–22 (MDSRFLLALFLVLLVLGCEVQA), serve as a signal peptide directing secretion. The segment at 66–74 (SVDEKLRDM) is lipid binding. The segment at 78-100 (SSAAMTTYAIIFTDQILTLLKGE) is lipoprotein lipase cofactor.

Belongs to the apolipoprotein C2 family. Post-translationally, proapolipoprotein C-II is synthesized as a sialic acid containing glycoprotein which is subsequently desialylated prior to its proteolytic processing. In terms of processing, proapolipoprotein C-II, the major form found in plasma undergoes proteolytic cleavage of its N-terminal hexapeptide to generate the mature form apolipoprotein C-II, which occurs as the minor form in plasma.

Its subcellular location is the secreted. Component of chylomicrons, very low-density lipoproteins (VLDL), low-density lipoproteins (LDL), and high-density lipoproteins (HDL) in plasma. Plays an important role in lipoprotein metabolism as an activator of lipoprotein lipase. This is Apolipoprotein C-II (APOC2) from Myodes glareolus (Bank vole).